The primary structure comprises 409 residues: Tryptophan synthase beta chain (409 aa).

K104 bears the N6-(pyridoxal phosphate)lysine mark.

It belongs to the TrpB family. Tetramer of two alpha and two beta chains. It depends on pyridoxal 5'-phosphate as a cofactor.

The catalysed reaction is (1S,2R)-1-C-(indol-3-yl)glycerol 3-phosphate + L-serine = D-glyceraldehyde 3-phosphate + L-tryptophan + H2O. Its pathway is amino-acid biosynthesis; L-tryptophan biosynthesis; L-tryptophan from chorismate: step 5/5. In terms of biological role, the beta subunit is responsible for the synthesis of L-tryptophan from indole and L-serine. This chain is Tryptophan synthase beta chain, found in Trichodesmium erythraeum (strain IMS101).